Consider the following 312-residue polypeptide: Malate dehydrogenase 1 (312 aa).

Residues 11–16 (GAGQIG) and D35 each bind NAD(+). Substrate-binding residues include R86 and R92. NAD(+)-binding positions include N99 and 122 to 124 (ITN). Substrate contacts are provided by N124 and R155. H179 acts as the Proton acceptor in catalysis.

Belongs to the LDH/MDH superfamily. MDH type 3 family.

The catalysed reaction is (S)-malate + NAD(+) = oxaloacetate + NADH + H(+). Catalyzes the reversible oxidation of malate to oxaloacetate. The polypeptide is Malate dehydrogenase 1 (Anaeromyxobacter dehalogenans (strain 2CP-C)).